We begin with the raw amino-acid sequence, 457 residues long: Nuclear hormone receptor family member odr-7 (457 aa).

Disordered stretches follow at residues Glu57–Ala95 and Lys230–Pro252. Residues Leu327–His407 constitute a DNA-binding region (nuclear receptor). 2 consecutive NR C4-type zinc fingers follow at residues Cys330–Cys351 and Cys367–Cys395. The segment at Gln435–Asn457 is disordered.

This sequence belongs to the nuclear hormone receptor family. NR0 subfamily. As to quaternary structure, heterodimer with a partner that confers DNA binding capacity or a nuclear hormone receptor whose DNA binding it inhibits. Expressed predominantly in the AWA neurons.

It localises to the nucleus. The protein localises to the cytoplasm. The protein resides in the perinuclear region. In terms of biological role, required for the function of one pair of chemosensory neurons called AWA neurons that are involved in chemotaxis to volatile odorants. Acts in a pathway that specifies olfactory neuronal fate. Regulates the transcription of olfactory signaling molecules such as odr-10 that specify AWA neuron identity and function. Represses the expression in AWA neurons of factors such as str-2 which specify AWC neuron identity. The protein is Nuclear hormone receptor family member odr-7 (odr-7) of Caenorhabditis elegans.